Consider the following 256-residue polypeptide: MGHLPQSLYSAAGPKFPYPGSSGLGVDQRKLTWSRFPVFLRCASTESLTSLTQNNAAEIELKYLVSQHGWDVRRLNRDDEDEIRRVSLVQAEAFHIPLALFDDFFFMFFQAEVLSALLYKLKNSPPDRYACLVAEQTSETETLSSSSVVGVVDVTAQTESSVLRYFPGVEEYLYVSGLAVSKSQRRKKMASTLLKACDVLCYLWGFKLLALRAYEDDAAARNLYSNAGYSVVETDPLWTSTWIGRKRRVLMSKRFS.

Residues methionine 1 to arginine 41 constitute a chloroplast transit peptide. The N-acetyltransferase domain occupies phenylalanine 106–serine 256. Residues leucine 178–valine 180, arginine 186–serine 191, aspartate 217–alanine 219, and tyrosine 224 contribute to the acetyl-CoA site. Catalysis depends on tyrosine 224, which acts as the Proton donor.

The protein belongs to the acetyltransferase family. GNAT subfamily. As to quaternary structure, oligomer. Autoacetylated. In terms of tissue distribution, expressed in green tissues.

The protein resides in the plastid. It localises to the chloroplast. It carries out the reaction an N-terminal L-alpha-aminoacyl-[protein] + acetyl-CoA = N-terminal N(alpha)-acetyl-L-alpha-aminoacyl-[protein] + CoA + H(+). It catalyses the reaction L-lysyl-[protein] + acetyl-CoA = N(6)-acetyl-L-lysyl-[protein] + CoA + H(+). The enzyme catalyses N-terminal L-methionyl-[protein] + acetyl-CoA = N-terminal N(alpha)-acetyl-L-methionyl-[protein] + CoA + H(+). The catalysed reaction is N-terminal L-seryl-[protein] + acetyl-CoA = N-terminal N(alpha)-acetyl-L-seryl-[protein] + CoA + H(+). It carries out the reaction N-terminal L-valyl-[protein] + acetyl-CoA = N-terminal N(alpha)-acetyl-L-valyl-[protein] + CoA + H(+). It catalyses the reaction N-terminal L-threonyl-[protein] + acetyl-CoA = N-terminal N(alpha)-acetyl-L-threonyl-[protein] + CoA + H(+). The enzyme catalyses N-terminal L-alanyl-[protein] + acetyl-CoA = N-terminal N(alpha)-acetyl-L-alanyl-[protein] + CoA + H(+). The catalysed reaction is N-terminal glycyl-[protein] + acetyl-CoA = N-terminal N(alpha)-acetylglycyl-[protein] + CoA + H(+). In terms of biological role, protein acetyltransferase with dual specificity triggering both N-alpha-acetylation (NTA), with a preference for leucine, methionine, serine, valine and to a lower extent threonine and alanine as substrates (can also use glycine), and epsilon-lysine acetylation (KA) of several plastid proteins. This is GCN5-related N-acetyltransferase 10, chloroplastic from Arabidopsis thaliana (Mouse-ear cress).